Consider the following 197-residue polypeptide: Probable low-affinity putrescine importer PlaP (197 aa).

Helical transmembrane passes span 33–53, 85–105, 107–127, 140–160, and 163–183; these read GVLIFSSVTVLASGTAAHAGV, VLLVXAIALLAIKLDLVTATA, INLGALVAFTFVNLSVISQFW, FNYLILPVCGALTVGALWINL, and SSMVLGLIWGGIGLVYXACVT.

This sequence belongs to the amino acid-polyamine-organocation (APC) superfamily.

The protein localises to the cell inner membrane. It catalyses the reaction putrescine(in) + H(+)(in) = putrescine(out) + H(+)(out). Functionally, putrescine importer. The sequence is that of Probable low-affinity putrescine importer PlaP (plaP) from Klebsiella pneumoniae.